Consider the following 347-residue polypeptide: Haptoglobin (347 aa).

The signal sequence occupies residues 1–18 (MSDLGAVVALLLWGQLFA). The region spanning 31-88 (DGCPKPPMIANGYVEHLVRYQCKNYYRLRTEGDGVYTLNNEKQWTNKAVGDKLPECEA) is the Sushi domain. 2 cysteine pairs are disulfide-bonded: Cys52-Cys86 and Cys90-Cys207. Residues 103–347 (ILGGHLDAKG…DWVQKTIAEN (245 aa)) are serine protease. N-linked (GlcNAc...) asparagine glycans are attached at residues Asn125, Asn148, Asn152, Asn182, and Asn232. 2 disulfides stabilise this stretch: Cys250/Cys281 and Cys292/Cys322. An interaction with CD163 region spans residues 259-264 (VPEKKT).

It belongs to the peptidase S1 family. Tetramer of two alpha and two beta chains; disulfide-linked. The hemoglobin/haptoglobin complex is composed of a haptoglobin dimer bound to two hemoglobin alpha-beta dimers. Interacts with CD163. Interacts with ERGIC3. In terms of tissue distribution, expressed by the liver and secreted in plasma.

Its subcellular location is the secreted. Its function is as follows. As a result of hemolysis, hemoglobin is found to accumulate in the kidney and is secreted in the urine. Haptoglobin captures, and combines with free plasma hemoglobin to allow hepatic recycling of heme iron and to prevent kidney damage. Haptoglobin also acts as an antioxidant, has antibacterial activity and plays a role in modulating many aspects of the acute phase response. Hemoglobin/haptoglobin complexes are rapidly cleared by the macrophage CD163 scavenger receptor expressed on the surface of liver Kupfer cells through an endocytic lysosomal degradation pathway. The sequence is that of Haptoglobin (HP) from Papio hamadryas (Hamadryas baboon).